A 257-amino-acid chain; its full sequence is tRNA pseudouridine synthase A (257 aa).

Residue aspartate 53 is the Nucleophile of the active site. Tyrosine 111 contacts substrate.

It belongs to the tRNA pseudouridine synthase TruA family. Homodimer.

The enzyme catalyses uridine(38/39/40) in tRNA = pseudouridine(38/39/40) in tRNA. Its function is as follows. Formation of pseudouridine at positions 38, 39 and 40 in the anticodon stem and loop of transfer RNAs. The sequence is that of tRNA pseudouridine synthase A from Xylella fastidiosa (strain M23).